The chain runs to 1023 residues: Phosphoenolpyruvate carboxylase (1023 aa).

Residues H199 and K669 contribute to the active site.

This sequence belongs to the PEPCase type 1 family. It depends on Mg(2+) as a cofactor.

It catalyses the reaction oxaloacetate + phosphate = phosphoenolpyruvate + hydrogencarbonate. Functionally, forms oxaloacetate, a four-carbon dicarboxylic acid source for the tricarboxylic acid cycle. This Trichormus variabilis (strain ATCC 29413 / PCC 7937) (Anabaena variabilis) protein is Phosphoenolpyruvate carboxylase.